Here is a 1191-residue protein sequence, read N- to C-terminus: Protogenin (1191 aa).

Positions 1-23 are cleaved as a signal peptide; that stretch reads MAPPVRPGMLPLLLLLLLPPLGS. 4 Ig-like domains span residues 24–124, 126–216, 229–316, and 321–405; these read VPGV…AHLT, STIS…ASLT, PTII…ATLT, and PSFV…ARLT. Residues 24 to 943 are Extracellular-facing; the sequence is VPGVWSFSEL…YYHLDQKSMT (920 aa). 2 disulfide bridges follow: Cys54-Cys107 and Cys150-Cys199. Asn237 carries N-linked (GlcNAc...) asparagine glycosylation. Cystine bridges form between Cys250–Cys298 and Cys342–Cys389. 5 Fibronectin type-III domains span residues 415–509, 511–607, 612–711, 718–811, and 816–911; these read APYN…TLED, PLRP…TPKA, APKS…VRDR, PPHH…TLPE, and PPVG…VLPK. Asn624 carries an N-linked (GlcNAc...) asparagine glycan. The chain crosses the membrane as a helical span at residues 944-964; that stretch reads GIAVGVGIALTCILICVLILI. Topologically, residues 965-1191 are cytoplasmic; the sequence is YRSKARKSSA…LRYAAEGFPV (227 aa). 2 disordered regions span residues 975–1010 and 1079–1191; these read SKTAQSGTQPLSQASASVAAGSDMGKNLERATETAE and ISDE…GFPV. Residues 977-990 are compositionally biased toward polar residues; the sequence is TAQSGTQPLSQASA. Positions 1104 to 1132 are enriched in basic and acidic residues; it reads DTEHSANSEGSHETGDSGRFSHESNDEIH. Composition is skewed to polar residues over residues 1135–1146 and 1171–1180; these read SVISSTPPTSNP and EQTSAPQTSA.

It belongs to the immunoglobulin superfamily. DCC family. As to expression, from mid-gastrulation to early somite stages, restricted to posterior neural plate and mesoderm with an anterior limit at the level of the rhombencephalon. Posterior restriction is progressively lost during somitogenesis. Expression is maintained in the neural tube and paraxial mesoderm during this process. As development proceeds, further restricted to the dorsal parts of the spinal cord and somites. In parallel, expression progresses caudally during axis elongation.

It is found in the membrane. Its function is as follows. May play a role in anteroposterior axis elongation. This chain is Protogenin, found in Mus musculus (Mouse).